The sequence spans 330 residues: D-lactate dehydrogenase (330 aa).

Residues 156–157 (RI), Asp176, 206–207 (VP), 233–235 (AAR), and Asp259 each bind NAD(+). The active site involves Arg235. Residue Glu264 is part of the active site. His296 (proton donor) is an active-site residue.

This sequence belongs to the D-isomer specific 2-hydroxyacid dehydrogenase family.

It catalyses the reaction (R)-lactate + NAD(+) = pyruvate + NADH + H(+). This Staphylococcus aureus (strain MSSA476) protein is D-lactate dehydrogenase (ldhD).